The chain runs to 242 residues: Fibrinolytic enzyme, isozyme C (242 aa).

One can recognise a Peptidase S1 domain in the interval 1–242 (VIGGTNASPG…YLGWIGDNSR (242 aa)). Cys-29 and Cys-45 are disulfide-bonded. Residues His-44 and Asp-93 each act as charge relay system in the active site. 3 disulfides stabilise this stretch: Cys-127–Cys-197, Cys-158–Cys-176, and Cys-187–Cys-219. The Charge relay system role is filled by Ser-191.

It belongs to the peptidase S1 family.

The polypeptide is Fibrinolytic enzyme, isozyme C (Lumbricus rubellus (Humus earthworm)).